The following is a 97-amino-acid chain: Aspartyl/glutamyl-tRNA(Asn/Gln) amidotransferase subunit C (97 aa).

Belongs to the GatC family. Heterotrimer of A, B and C subunits.

The catalysed reaction is L-glutamyl-tRNA(Gln) + L-glutamine + ATP + H2O = L-glutaminyl-tRNA(Gln) + L-glutamate + ADP + phosphate + H(+). It catalyses the reaction L-aspartyl-tRNA(Asn) + L-glutamine + ATP + H2O = L-asparaginyl-tRNA(Asn) + L-glutamate + ADP + phosphate + 2 H(+). Allows the formation of correctly charged Asn-tRNA(Asn) or Gln-tRNA(Gln) through the transamidation of misacylated Asp-tRNA(Asn) or Glu-tRNA(Gln) in organisms which lack either or both of asparaginyl-tRNA or glutaminyl-tRNA synthetases. The reaction takes place in the presence of glutamine and ATP through an activated phospho-Asp-tRNA(Asn) or phospho-Glu-tRNA(Gln). The sequence is that of Aspartyl/glutamyl-tRNA(Asn/Gln) amidotransferase subunit C from Anaeromyxobacter sp. (strain K).